Reading from the N-terminus, the 156-residue chain is Small ribosomal subunit protein uS7c (156 aa).

Belongs to the universal ribosomal protein uS7 family. As to quaternary structure, part of the 30S ribosomal subunit.

Its subcellular location is the plastid. The protein resides in the chloroplast. Its function is as follows. One of the primary rRNA binding proteins, it binds directly to 16S rRNA where it nucleates assembly of the head domain of the 30S subunit. The protein is Small ribosomal subunit protein uS7c (rps7) of Bowenia serrulata (Byfield fern).